The following is a 392-amino-acid chain: N-acyl-phosphatidylethanolamine-hydrolyzing phospholipase D (392 aa).

At Met1 the chain carries N-acetylmethionine. Residues 1–16 are compositionally biased toward polar residues; sequence MDENETNQLLMTSNQY. Positions 1-39 are disordered; it reads MDENETNQLLMTSNQYPKEAVRKRQNSRNSGGSDSSRFS. The segment covering 27 to 36 has biased composition (low complexity); that stretch reads SRNSGGSDSS. Zn(2+)-binding residues include His183 and His185. Tyr186 contributes to the an N-acyl-1,2-diacyl-sn-glycero-3-phosphoethanolamine binding site. Positions 187, 188, and 251 each coordinate Zn(2+). 2 residues coordinate deoxycholate: Lys254 and Met258. Asp282 lines the Zn(2+) pocket. Position 319 (His319) interacts with an N-acyl-1,2-diacyl-sn-glycero-3-phosphoethanolamine. Zn(2+) is bound at residue His341. Deoxycholate is bound at residue Ala346.

This sequence belongs to the NAPE-PLD family. Homodimer. Bile acids promote the assembly of inactive monomers into an active dimer and enable catalysis. Requires Zn(2+) as cofactor. In terms of tissue distribution, widely expressed. Highest expression in brain, kidney and testis (at protein level). Expressed in adipose tissue (at protein level).

Its subcellular location is the golgi apparatus membrane. It localises to the early endosome membrane. The protein resides in the nucleus envelope. The protein localises to the nucleus. It is found in the nucleoplasm. The catalysed reaction is an N-acyl-1,2-diacyl-sn-glycero-3-phosphoethanolamine + H2O = an N-acylethanolamine + a 1,2-diacyl-sn-glycero-3-phosphate + H(+). It catalyses the reaction N-butanoyl-1-hexadecanoyl-2-(9Z,12Z-octadecadienoyl)-sn-glycero-3-phosphoethanolamine + H2O = N-butanoyl ethanolamine + 1-hexadecanoyl-2-(9Z,12Z-octadecadienoyl)-sn-glycero-3-phosphate + H(+). It carries out the reaction N-hexanoyl-1-hexadecanoyl-2-(9Z,12Z-octadecadienoyl)-sn-glycero-3-phosphoethanolamine + H2O = N-hexanoyl ethanolamine + 1-hexadecanoyl-2-(9Z,12Z-octadecadienoyl)-sn-glycero-3-phosphate + H(+). The enzyme catalyses N-octanoyl-1-hexadecanoyl-2-(9Z,12Z-octadecadienoyl)-sn-glycero-3-phosphoethanolamine + H2O = N-octanoyl ethanolamine + 1-hexadecanoyl-2-(9Z,12Z-octadecadienoyl)-sn-glycero-3-phosphate + H(+). The catalysed reaction is N-decanoyl-1-hexadecanoyl-2-(9Z,12Z-octadecadienoyl)-sn-glycero-3-phosphoethanolamine + H2O = N-decanoyl ethanolamine + 1-hexadecanoyl-2-(9Z,12Z-octadecadienoyl)-sn-glycero-3-phosphate + H(+). It catalyses the reaction N-dodecanoyl-1,2-di-(9Z-octadecenoyl)-sn-glycero-3-phosphoethanolamine + H2O = N-dodecanoylethanolamine + 1,2-di-(9Z-octadecenoyl)-sn-glycero-3-phosphate + H(+). It carries out the reaction N-tetradecanoyl-1,2-di-(9Z-octadecenoyl)-sn-glycero-3-phosphoethanolamine + H2O = N-tetradecanoylethanolamine + 1,2-di-(9Z-octadecenoyl)-sn-glycero-3-phosphate + H(+). The enzyme catalyses N-hexadecanoyl-1,2-di-(9Z-octadecenoyl)-sn-glycero-3-phosphoethanolamine + H2O = N-hexadecanoylethanolamine + 1,2-di-(9Z-octadecenoyl)-sn-glycero-3-phosphate + H(+). The catalysed reaction is N,1-dihexadecanoyl-2-(9Z,12Z-octadecadienoyl)-sn-glycero-3-phosphoethanolamine + H2O = 1-hexadecanoyl-2-(9Z,12Z-octadecadienoyl)-sn-glycero-3-phosphate + N-hexadecanoylethanolamine + H(+). It catalyses the reaction N-octadecanoyl-1,2-di-(9Z-octadecenoyl)-sn-glycero-3-phosphoethanolamine + H2O = N-octadecanoyl ethanolamine + 1,2-di-(9Z-octadecenoyl)-sn-glycero-3-phosphate + H(+). It carries out the reaction N,1,2-tri-(9Z-octadecenoyl)-sn-glycero-3-phosphoethanolamine + H2O = N-(9Z-octadecenoyl) ethanolamine + 1,2-di-(9Z-octadecenoyl)-sn-glycero-3-phosphate + H(+). The enzyme catalyses N-(5Z,8Z,11Z,14Z-eicosatetraenoyl)-1,2-diacyl-sn-glycero-3-phosphoethanolamine + H2O = N-(5Z,8Z,11Z,14Z-eicosatetraenoyl)-ethanolamine + a 1,2-diacyl-sn-glycero-3-phosphate + H(+). The catalysed reaction is N-(5Z,8Z,11Z,14Z-eicosatetraenoyl)-1,2-di-(9Z-octadecenoyl)-sn-glycero-3-phosphoethanolamine + H2O = N-(5Z,8Z,11Z,14Z-eicosatetraenoyl)-ethanolamine + 1,2-di-(9Z-octadecenoyl)-sn-glycero-3-phosphate + H(+). It catalyses the reaction 1-O-(1Z-octadecenoyl)-2-(9Z-octadecenoyl)-sn-glycero-3-phospho-N-hexadecanoyl-ethanolamine + H2O = 1-O-(1Z-octadecenoyl)-2-(9Z-octadecenoyl)-sn-glycero-3-phosphate + N-hexadecanoylethanolamine + H(+). It carries out the reaction N,1-diacyl-sn-glycero-3-phosphoethanolamine + H2O = an N-acylethanolamine + a 1-acyl-sn-glycero-3-phosphate + H(+). The enzyme catalyses N,1-dihexadecanoyl-sn-glycero-3-phosphoethanolamine + H2O = N-hexadecanoylethanolamine + 1-hexadecanoyl-sn-glycero-3-phosphate + H(+). The catalysed reaction is N-(5Z,8Z,11Z,14Z-eicosatetraenoyl)-1-(9Z-octadecenoyl)-sn-glycero-3-phosphoethanolamine + H2O = N-(5Z,8Z,11Z,14Z-eicosatetraenoyl)-ethanolamine + 1-(9Z-octadecenoyl)-sn-glycero-3-phosphate + H(+). Its activity is regulated as follows. Activated by divalent cations. Activated by bile acids. In terms of biological role, D-type phospholipase that hydrolyzes N-acyl-phosphatidylethanolamines (NAPEs) to produce bioactive N-acylethanolamines/fatty acid ethanolamides (NAEs/FAEs) and phosphatidic acid. Cleaves the terminal phosphodiester bond of diacyl- and alkenylacyl-NAPEs, primarily playing a role in the generation of long-chain saturated and monounsaturated NAEs in the brain. May control NAPE homeostasis in dopaminergic neuron membranes and regulate neuron survival, partly through RAC1 activation. As a regulator of lipid metabolism in the adipose tissue, mediates the crosstalk between adipocytes, gut microbiota and immune cells to control body temperature and weight. In particular, regulates energy homeostasis by promoting cold-induced brown or beige adipocyte differentiation program to generate heat from fatty acids and glucose. Has limited D-type phospholipase activity toward N-acyl lyso-NAPEs. The polypeptide is N-acyl-phosphatidylethanolamine-hydrolyzing phospholipase D (NAPEPLD) (Bos taurus (Bovine)).